We begin with the raw amino-acid sequence, 312 residues long: Aspartate carbamoyltransferase catalytic subunit (312 aa).

Carbamoyl phosphate-binding residues include arginine 58 and threonine 59. An L-aspartate-binding site is contributed by lysine 86. Residues arginine 108, histidine 136, and glutamine 139 each coordinate carbamoyl phosphate. L-aspartate-binding residues include arginine 169 and arginine 223. Carbamoyl phosphate is bound by residues glycine 264 and proline 265.

This sequence belongs to the aspartate/ornithine carbamoyltransferase superfamily. ATCase family. In terms of assembly, heterododecamer (2C3:3R2) of six catalytic PyrB chains organized as two trimers (C3), and six regulatory PyrI chains organized as three dimers (R2).

It catalyses the reaction carbamoyl phosphate + L-aspartate = N-carbamoyl-L-aspartate + phosphate + H(+). It functions in the pathway pyrimidine metabolism; UMP biosynthesis via de novo pathway; (S)-dihydroorotate from bicarbonate: step 2/3. Its function is as follows. Catalyzes the condensation of carbamoyl phosphate and aspartate to form carbamoyl aspartate and inorganic phosphate, the committed step in the de novo pyrimidine nucleotide biosynthesis pathway. This chain is Aspartate carbamoyltransferase catalytic subunit, found in Acetivibrio thermocellus (strain ATCC 27405 / DSM 1237 / JCM 9322 / NBRC 103400 / NCIMB 10682 / NRRL B-4536 / VPI 7372) (Clostridium thermocellum).